The chain runs to 822 residues: Structure-specific endonuclease subunit SLX4 (822 aa).

6 disordered regions span residues Met-1 to Ser-39, Thr-73 to Leu-117, Gly-277 to Asp-362, Arg-390 to Ser-418, Lys-456 to Leu-507, and Lys-589 to Ser-676. Over residues Ser-13–Ser-39 the composition is skewed to polar residues. Residues Asn-280 to Lys-294 are compositionally biased toward low complexity. Positions Val-310–Gln-320 are enriched in polar residues. Residues Gly-342–Asn-354 are compositionally biased toward basic residues. Low complexity predominate over residues Ser-460 to Thr-470. The segment covering Asn-471–Asn-484 has biased composition (polar residues). A compositionally biased stretch (low complexity) spans Ser-490–Gln-506. Over residues Lys-589 to Lys-612 the composition is skewed to polar residues. The segment covering Thr-627–Gln-636 has biased composition (basic residues). Low complexity predominate over residues Lys-637–Ala-650.

The protein belongs to the SLX4 family. In terms of assembly, forms a heterodimer with SLX1. In terms of processing, phosphorylated in response to DNA damage.

The protein localises to the nucleus. Functionally, regulatory subunit of the SLX1-SLX4 structure-specific endonuclease that resolves DNA secondary structures generated during DNA repair and recombination. Has endonuclease activity towards branched DNA substrates, introducing single-strand cuts in duplex DNA close to junctions with ss-DNA. This is Structure-specific endonuclease subunit SLX4 from Coccidioides immitis (strain RS) (Valley fever fungus).